A 153-amino-acid chain; its full sequence is Putative transmembrane protein INAFM2 (153 aa).

Residues 1–23 (MKERDAAPAERGKPATYTGDKKA) are compositionally biased toward basic and acidic residues. A disordered region spans residues 1–24 (MKERDAAPAERGKPATYTGDKKAK). The chain crosses the membrane as a helical span at residues 36–56 (LATVFAYVLSVSLAAIVLAVY). The tract at residues 66 to 153 (AGTSGGAAGP…EETAAAPGSR (88 aa)) is disordered. Residues 79-101 (GSNATGPSGTSGAAAAGPNTTGS) are compositionally biased toward low complexity. Residues 118 to 131 (PAPPEPPADSPPAG) show a composition bias toward pro residues.

Its subcellular location is the membrane. The sequence is that of Putative transmembrane protein INAFM2 from Homo sapiens (Human).